The following is a 31-amino-acid chain: Cytochrome b6-f complex subunit 6 (31 aa).

Residues 3 to 23 form a helical membrane-spanning segment; it reads ILISYFCFLLIFFLFTLILFF.

This sequence belongs to the PetL family. As to quaternary structure, the 4 large subunits of the cytochrome b6-f complex are cytochrome b6, subunit IV (17 kDa polypeptide, PetD), cytochrome f and the Rieske protein, while the 4 small subunits are PetG, PetL, PetM and PetN. The complex functions as a dimer.

The protein localises to the plastid. It is found in the chloroplast thylakoid membrane. In terms of biological role, component of the cytochrome b6-f complex, which mediates electron transfer between photosystem II (PSII) and photosystem I (PSI), cyclic electron flow around PSI, and state transitions. PetL is important for photoautotrophic growth as well as for electron transfer efficiency and stability of the cytochrome b6-f complex. This is Cytochrome b6-f complex subunit 6 from Gnetum parvifolium (Small-leaved jointfir).